We begin with the raw amino-acid sequence, 1109 residues long: Carbamoyl phosphate synthase large chain (1109 aa).

Positions 1-402 (MPKRTDLKSV…ALQKALRSLE (402 aa)) are carboxyphosphate synthetic domain. Positions 129, 169, 175, 176, 208, 210, 215, 241, 242, 243, 285, and 299 each coordinate ATP. The ATP-grasp 1 domain occupies 133–328 (KGVVERCGAE…IAKIATKLSL (196 aa)). 3 residues coordinate Mg(2+): Gln285, Glu299, and Asn301. Mn(2+) is bound by residues Gln285, Glu299, and Asn301. Residues 403 to 546 (QKGSQLDFSS…YHYSAYDEED (144 aa)) form an oligomerization domain region. A carbamoyl phosphate synthetic domain region spans residues 547–950 (EVALHSKPSI…AFAKSQAGAN (404 aa)). The ATP-grasp 2 domain maps to 677–868 (SRVLDKAGLV…MAKAAALIGT (192 aa)). Arg713, Arg752, Leu754, Glu759, Gly784, Ile785, His786, Ser787, Gln827, and Glu839 together coordinate ATP. Residues Gln827, Glu839, and Asn841 each contribute to the Mg(2+) site. Residues Gln827, Glu839, and Asn841 each contribute to the Mn(2+) site. The MGS-like domain occupies 951–1096 (NALPTEGKVF…QEHAAALGES (146 aa)). The tract at residues 951–1109 (NALPTEGKVF…AAAKADLQHA (159 aa)) is allosteric domain.

This sequence belongs to the CarB family. As to quaternary structure, composed of two chains; the small (or glutamine) chain promotes the hydrolysis of glutamine to ammonia, which is used by the large (or ammonia) chain to synthesize carbamoyl phosphate. Tetramer of heterodimers (alpha,beta)4. It depends on Mg(2+) as a cofactor. Mn(2+) is required as a cofactor.

It catalyses the reaction hydrogencarbonate + L-glutamine + 2 ATP + H2O = carbamoyl phosphate + L-glutamate + 2 ADP + phosphate + 2 H(+). It carries out the reaction hydrogencarbonate + NH4(+) + 2 ATP = carbamoyl phosphate + 2 ADP + phosphate + 2 H(+). It functions in the pathway amino-acid biosynthesis; L-arginine biosynthesis; carbamoyl phosphate from bicarbonate: step 1/1. Its pathway is pyrimidine metabolism; UMP biosynthesis via de novo pathway; (S)-dihydroorotate from bicarbonate: step 1/3. Its function is as follows. Large subunit of the glutamine-dependent carbamoyl phosphate synthetase (CPSase). CPSase catalyzes the formation of carbamoyl phosphate from the ammonia moiety of glutamine, carbonate, and phosphate donated by ATP, constituting the first step of 2 biosynthetic pathways, one leading to arginine and/or urea and the other to pyrimidine nucleotides. The large subunit (synthetase) binds the substrates ammonia (free or transferred from glutamine from the small subunit), hydrogencarbonate and ATP and carries out an ATP-coupled ligase reaction, activating hydrogencarbonate by forming carboxy phosphate which reacts with ammonia to form carbamoyl phosphate. The sequence is that of Carbamoyl phosphate synthase large chain from Pseudarthrobacter chlorophenolicus (strain ATCC 700700 / DSM 12829 / CIP 107037 / JCM 12360 / KCTC 9906 / NCIMB 13794 / A6) (Arthrobacter chlorophenolicus).